Here is a 341-residue protein sequence, read N- to C-terminus: UDP-N-acetylenolpyruvoylglucosamine reductase (341 aa).

Residues leucine 15–arginine 185 enclose the FAD-binding PCMH-type domain. Arginine 161 is an active-site residue. Serine 231 serves as the catalytic Proton donor. Glutamate 327 is a catalytic residue.

Belongs to the MurB family. The cofactor is FAD.

It localises to the cytoplasm. It carries out the reaction UDP-N-acetyl-alpha-D-muramate + NADP(+) = UDP-N-acetyl-3-O-(1-carboxyvinyl)-alpha-D-glucosamine + NADPH + H(+). Its pathway is cell wall biogenesis; peptidoglycan biosynthesis. In terms of biological role, cell wall formation. The polypeptide is UDP-N-acetylenolpyruvoylglucosamine reductase (Shewanella baltica (strain OS195)).